Consider the following 129-residue polypeptide: uncharacterized protein (129 aa).

The disordered stretch occupies residues Lys23–Lys101. Composition is skewed to basic and acidic residues over residues Cys31–Thr40 and Glu67–Pro80.

This is an uncharacterized protein from Ictaluridae (bullhead catfishes).